The primary structure comprises 308 residues: Putative mitochondrial transporter UCP3 (308 aa).

At 1–10 (MVGLKPPEVP) the chain is on the mitochondrial intermembrane side. The helical transmembrane segment at 11 to 32 (PTTAVKLLGAGTAACFADLLTF) threads the bilayer. Solcar repeat units lie at residues 11–102 (PTTA…VKQL), 111–202 (SSIT…IKEK), and 211–296 (DNLP…LKRA). The Mitochondrial matrix portion of the chain corresponds to 33 to 73 (PLDTAKVRLQIQGENQAARSAQYRGVLGTILTMVRNEGPRS). A helical membrane pass occupies residues 74 to 96 (PYNGLVAGLQRQMSFASIRIGLY). Over 97–116 (DSVKQLYTPKGSDHSSITTR) the chain is Mitochondrial intermembrane. Residues 117 to 133 (ILAGCTTGAMAVTCAQP) traverse the membrane as a helical segment. The Mitochondrial matrix segment spans residues 134–179 (TDVVKVRFQASIHAGPRSNRKYSGTMDAYRTIAREEGVRGLWKGIL). The helical transmembrane segment at 180-196 (PNITRNAIVNCAEMVTY) threads the bilayer. Over 197–213 (DVIKEKVLDYHLLTDNL) the chain is Mitochondrial intermembrane. Residues 214 to 233 (PCHFVSAFGAGFCATVVASP) traverse the membrane as a helical segment. Topologically, residues 234-267 (VDVVKTRYMNSPPGQYQNPLDCMLKMVTQEGPTA) are mitochondrial matrix. A helical membrane pass occupies residues 268-290 (FYKGFTPSFLRLGSWNVVMFVSY). The segment at 275 to 297 (SFLRLGSWNVVMFVSYEQLKRAL) is purine nucleotide binding. Residues 291–308 (EQLKRALMKVQMLRESPF) are Mitochondrial intermembrane-facing.

Belongs to the mitochondrial carrier (TC 2.A.29) family. Interacts with HAX1; the interaction is direct and calcium-dependent.

It is found in the mitochondrion inner membrane. Putative transmembrane transporter that plays a role in mitochondrial metabolism via an as yet unclear mechanism. Originally, this mitochondrial protein was thought to act as a proton transmembrane transporter from the mitochondrial intermembrane space into the matrix, causing proton leaks through the inner mitochondrial membrane, thereby uncoupling mitochondrial membrane potential generation from ATP synthesis. However, this function is controversial and uncoupling may not be the function, or at least not the main function, but rather a consequence of more conventional metabolite transporter activity. The polypeptide is Putative mitochondrial transporter UCP3 (Sus scrofa (Pig)).